Consider the following 151-residue polypeptide: Caveolin-3 (151 aa).

Residues 1–83 lie on the Cytoplasmic side of the membrane; the sequence is MMAEEHTDLE…RLLSTLLGVP (83 aa). Lys-38 participates in a covalent cross-link: Glycyl lysine isopeptide (Lys-Gly) (interchain with G-Cter in SUMO3). The segment at 64-114 is required for interaction with DAG1; that stretch reads TFTVSKYWCYRLLSTLLGVPLALLWGFLFACISFCHIWAVVPCIKSYLIEI. The helical intramembrane region spans 84–104; the sequence is LALLWGFLFACISFCHIWAVV. Over 105-151 the chain is Cytoplasmic; the sequence is PCIKSYLIEIQCISHIYSLCIRTFCNPLFAALGQVCSSIKVVLRKEV.

This sequence belongs to the caveolin family. In terms of assembly, homooligomer. Interacts with DLG1 and KCNA5; forms a ternary complex. Interacts with TRIM72. Interacts with MUSK; may regulate MUSK signaling. Interacts with DAG1 (via its C-terminal); the interaction prevents binding of DAG1 with DMD. Interacts with DYSF. Interacts with POPDC1. Interacts with CAVIN1 and CAVIN2. Interacts with CAVIN4. Sumoylation with SUMO3 by PIAS4 may reduce agonist-induced internalization and desensitization of adrenergic receptor ABRD2. Expressed predominantly in muscle.

The protein localises to the golgi apparatus membrane. Its subcellular location is the cell membrane. It is found in the membrane. The protein resides in the caveola. It localises to the sarcolemma. Functionally, may act as a scaffolding protein within caveolar membranes. Interacts directly with G-protein alpha subunits and can functionally regulate their activity. May also regulate voltage-gated potassium channels. Plays a role in the sarcolemma repair mechanism of both skeletal muscle and cardiomyocytes that permits rapid resealing of membranes disrupted by mechanical stress. Mediates the recruitment of CAVIN2 and CAVIN3 proteins to the caveolae. The chain is Caveolin-3 (CAV3) from Homo sapiens (Human).